The sequence spans 86 residues: Small ribosomal subunit protein bS18 (86 aa).

Belongs to the bacterial ribosomal protein bS18 family. As to quaternary structure, part of the 30S ribosomal subunit. Forms a tight heterodimer with protein bS6.

Functionally, binds as a heterodimer with protein bS6 to the central domain of the 16S rRNA, where it helps stabilize the platform of the 30S subunit. This is Small ribosomal subunit protein bS18 from Maridesulfovibrio salexigens (strain ATCC 14822 / DSM 2638 / NCIMB 8403 / VKM B-1763) (Desulfovibrio salexigens).